A 263-amino-acid polypeptide reads, in one-letter code: Peptide methionine sulfoxide reductase A4, chloroplastic (263 aa).

Residues 1–75 (MPPLLASTSS…GLGGLGGSPR (75 aa)) constitute a chloroplast transit peptide.

This sequence belongs to the MsrA Met sulfoxide reductase family. As to expression, expressed in roots, stems, leaves and flowers.

It is found in the plastid. It localises to the chloroplast. It carries out the reaction L-methionyl-[protein] + [thioredoxin]-disulfide + H2O = L-methionyl-(S)-S-oxide-[protein] + [thioredoxin]-dithiol. The enzyme catalyses [thioredoxin]-disulfide + L-methionine + H2O = L-methionine (S)-S-oxide + [thioredoxin]-dithiol. Functionally, catalyzes the reduction of methionine sulfoxide (MetSO) to methionine in proteins. Involved in abiotic and salt stress responses. Plays a protective role against oxidative stress by restoring activity to proteins that have been inactivated by methionine oxidation. MSRA family specifically reduces the MetSO S-enantiomer. This Oryza sativa subsp. japonica (Rice) protein is Peptide methionine sulfoxide reductase A4, chloroplastic.